We begin with the raw amino-acid sequence, 138 residues long: F-box protein At4g12382 (138 aa).

Residues 7–53 (NPSFADLPSSLIEVIMSHLALKNNIRASAACKSWYEVGVSVRVVEKH) form the F-box domain.

The sequence is that of F-box protein At4g12382 from Arabidopsis thaliana (Mouse-ear cress).